Consider the following 431-residue polypeptide: Glutamate-1-semialdehyde 2,1-aminomutase 2 (431 aa).

An N6-(pyridoxal phosphate)lysine modification is found at Lys-268.

This sequence belongs to the class-III pyridoxal-phosphate-dependent aminotransferase family. HemL subfamily. As to quaternary structure, homodimer. It depends on pyridoxal 5'-phosphate as a cofactor.

The protein resides in the cytoplasm. It catalyses the reaction (S)-4-amino-5-oxopentanoate = 5-aminolevulinate. Its pathway is porphyrin-containing compound metabolism; protoporphyrin-IX biosynthesis; 5-aminolevulinate from L-glutamyl-tRNA(Glu): step 2/2. The chain is Glutamate-1-semialdehyde 2,1-aminomutase 2 from Anoxybacillus flavithermus (strain DSM 21510 / WK1).